We begin with the raw amino-acid sequence, 95 residues long: Large ribosomal subunit protein bL25 (95 aa).

It belongs to the bacterial ribosomal protein bL25 family. As to quaternary structure, part of the 50S ribosomal subunit; part of the 5S rRNA/L5/L18/L25 subcomplex. Contacts the 5S rRNA. Binds to the 5S rRNA independently of L5 and L18.

Functionally, this is one of the proteins that binds to the 5S RNA in the ribosome where it forms part of the central protuberance. This is Large ribosomal subunit protein bL25 from Shewanella frigidimarina (strain NCIMB 400).